Reading from the N-terminus, the 338-residue chain is Biotin synthase (338 aa).

The 226-residue stretch at 59-284 folds into the Radical SAM core domain; sequence EEVEIEGIVS…RTTLRFAGGR (226 aa). [4Fe-4S] cluster-binding residues include cysteine 74, cysteine 78, and cysteine 81. Residues cysteine 117, cysteine 209, and arginine 279 each coordinate [2Fe-2S] cluster.

Belongs to the radical SAM superfamily. Biotin synthase family. In terms of assembly, homodimer. Requires [4Fe-4S] cluster as cofactor. [2Fe-2S] cluster is required as a cofactor.

It catalyses the reaction (4R,5S)-dethiobiotin + (sulfur carrier)-SH + 2 reduced [2Fe-2S]-[ferredoxin] + 2 S-adenosyl-L-methionine = (sulfur carrier)-H + biotin + 2 5'-deoxyadenosine + 2 L-methionine + 2 oxidized [2Fe-2S]-[ferredoxin]. The protein operates within cofactor biosynthesis; biotin biosynthesis; biotin from 7,8-diaminononanoate: step 2/2. In terms of biological role, catalyzes the conversion of dethiobiotin (DTB) to biotin by the insertion of a sulfur atom into dethiobiotin via a radical-based mechanism. The protein is Biotin synthase of Corynebacterium urealyticum (strain ATCC 43042 / DSM 7109).